We begin with the raw amino-acid sequence, 162 residues long: Nucleotide-binding protein SCO4614 (162 aa).

Belongs to the YajQ family.

The protein localises to the cytoplasm. It localises to the nucleoid. In terms of biological role, nucleotide-binding protein. In Streptomyces coelicolor (strain ATCC BAA-471 / A3(2) / M145), this protein is Nucleotide-binding protein SCO4614.